The following is a 304-amino-acid chain: Taste receptor type 2 member 4 (304 aa).

At 1-10 (MLWELYAFVF) the chain is on the extracellular side. The helical transmembrane segment at 11-31 (AASVVFNFVGIVANLFIIVII) threads the bilayer. Over 32–46 (SKTWVKSHKISSSDK) the chain is Cytoplasmic. A helical membrane pass occupies residues 47-67 (ILFSLAITRFLTLGLFLLNTV). At 68-80 (YIATNTGRSVYFS) the chain is on the extracellular side. Residues 81-101 (TFFLLCWKFLDSNSLWLVTFL) form a helical membrane-spanning segment. The Cytoplasmic segment spans residues 102–128 (NCLYCVKITHFQHPVFLLLKRTVSMKT). The helical transmembrane segment at 129–149 (TSLLLACLLISAFTTLLYFVL) threads the bilayer. Residues 150-171 (TQISRFPEHIIGRNDTLFDVSD) are Extracellular-facing. N163 carries N-linked (GlcNAc...) asparagine glycosylation. The helical transmembrane segment at 172–192 (GILTLAASLILSSLLQFLLNV) threads the bilayer. Residues 193–229 (TFASLLIHSLRRHVQKMQRNRSSFWNPQTEAHVGAMR) lie on the Cytoplasmic side of the membrane. A helical transmembrane segment spans residues 230–250 (LMICFLVLYIPYSIAALLYFP). Residues 251-260 (SYMRKNLRAQ) lie on the Extracellular side of the membrane. Residues 261 to 281 (AACMIITAAYPPGHSILLIIT) form a helical membrane-spanning segment. Topologically, residues 282–304 (HHKLKAKAKKICCFYKLRDFVSN) are cytoplasmic.

The protein belongs to the G-protein coupled receptor T2R family. As to expression, expressed in tongue, stomach and duodenum.

The protein resides in the membrane. It is found in the cell projection. The protein localises to the cilium membrane. Gustducin-coupled receptor implicated in the perception of bitter compounds in the oral cavity and the gastrointestinal tract. Signals through PLCB2 and the calcium-regulated cation channel TRPM5. In airway epithelial cells, binding of denatonium increases the intracellular calcium ion concentration and stimulates ciliary beat frequency. The sequence is that of Taste receptor type 2 member 4 from Rattus norvegicus (Rat).